The primary structure comprises 529 residues: ATP synthase F(1) complex catalytic subunit beta, mitochondrial (529 aa).

A mitochondrion-targeting transit peptide spans 1–46 (MLSLVGRVASASASGALRGLNPLAALPQAHLLLRTAPAGVHPARDY). O-linked (GlcNAc) serine glycosylation is present at S106. K124, K133, and K161 each carry N6-acetyllysine; alternate. 3 positions are modified to N6-succinyllysine; alternate: K124, K133, and K161. Position 198 is an N6-acetyllysine (K198). ADP-binding residues include G209, V210, G211, K212, T213, and V214. G209 provides a ligand contact to ATP. G209, V210, G211, K212, and T213 together coordinate phosphate. ATP contacts are provided by G211, K212, T213, and V214. Position 213 (T213) interacts with Mg(2+). Residue E238 coordinates Mg(2+). An ATP-binding site is contributed by R239. Residues K259 and K264 each carry the N6-acetyllysine; alternate modification. Residues K259 and K264 each carry the N6-succinyllysine; alternate modification. T312 carries the post-translational modification Phosphothreonine. S415 carries the post-translational modification Phosphoserine. The residue at position 426 (K426) is an N6-acetyllysine. A Phosphoserine modification is found at S433. N6-acetyllysine is present on residues K480 and K485. The residue at position 522 (K522) is an N6-acetyllysine; alternate. K522 carries the post-translational modification N6-succinyllysine; alternate. At S529 the chain carries Phosphoserine.

Belongs to the ATPase alpha/beta chains family. In terms of assembly, homotrimer. Component of the ATP synthase complex composed at least of ATP5F1A/subunit alpha, ATP5F1B/subunit beta, ATP5MC1/subunit c (homooctomer), MT-ATP6/subunit a, MT-ATP8/subunit 8, ATP5ME/subunit e, ATP5MF/subunit f, ATP5MG/subunit g, ATP5MK/subunit k, ATP5MJ/subunit j, ATP5F1C/subunit gamma, ATP5F1D/subunit delta, ATP5F1E/subunit epsilon, ATP5PF/subunit F6, ATP5PB/subunit b, ATP5PD/subunit d, ATP5PO/subunit OSCP. ATP synthase complex consists of a soluble F(1) head domain (subunits alpha(3) and beta(3)) - the catalytic core - and a membrane F(0) domain - the membrane proton channel (subunits c, a, 8, e, f, g, k and j). These two domains are linked by a central stalk (subunits gamma, delta, and epsilon) rotating inside the F1 region and a stationary peripheral stalk (subunits F6, b, d, and OSCP). Interacts with PPIF. Interacts with BCL2L1 isoform BCL-X(L); the interaction mediates the association of BCL2L1 isoform BCL-X(L) with the mitochondrial membrane F(1)F(0) ATP synthase and enhances neurons metabolic efficiency. Interacts with CLN5 and PPT1. Interacts with S100A1; this interaction increases F1-ATPase activity. Interacts with MTLN. Interacts with TTC5/STRAP; the interaction results in decreased mitochondrial ATP production.

The protein localises to the mitochondrion inner membrane. It catalyses the reaction ATP + H2O + 4 H(+)(in) = ADP + phosphate + 5 H(+)(out). Its function is as follows. Catalytic subunit beta, of the soluble F(1) head domain within the mitochondrial ATP synthase complex (F(1)F(0) ATP synthase or complex V) that produces ATP from ADP and phosphate inorganique in the presence of a proton gradient across the membrane which is generated by electron transport complexes of the respiratory chain. With the non-catalytic subunit alpha (ATP5F1A), forms the catalytic core in the F(1) domain. ATP synthase complex consist of two structural domains, F(1) - containing the extramembraneous catalytic core, and F(0) - containing the membrane proton channel, linked together by a central stalk and a peripheral stalk. During catalysis, ATP synthesis in the catalytic domain of F(1) is coupled via a rotary mechanism of the central stalk subunits to proton translocation. Functionally, catalytic subunit beta, of the mitochondrial membrane ATP synthase complex (F(1)F(0) ATP synthase or Complex V) that produces ATP from ADP in the presence of a proton gradient across the membrane which is generated by electron transport complexes of the respiratory chain. ATP synthase complex consist of a soluble F(1) head domain - the catalytic core - and a membrane F(1) domain - the membrane proton channel. These two domains are linked by a central stalk rotating inside the F(1) region and a stationary peripheral stalk. During catalysis, ATP synthesis in the catalytic domain of F(1) is coupled via a rotary mechanism of the central stalk subunits to proton translocation. In vivo, can only synthesize ATP although its ATP hydrolase activity can be activated artificially in vitro. With the subunit alpha (ATP5F1A), forms the catalytic core in the F(1) domain. The polypeptide is ATP synthase F(1) complex catalytic subunit beta, mitochondrial (Rattus norvegicus (Rat)).